We begin with the raw amino-acid sequence, 366 residues long: tRNA/tmRNA (uracil-C(5))-methyltransferase (366 aa).

The S-adenosyl-L-methionine site is built by Q190, Y218, N223, E239, and D299. The active-site Nucleophile is the C324. Residue E358 is the Proton acceptor of the active site.

This sequence belongs to the class I-like SAM-binding methyltransferase superfamily. RNA M5U methyltransferase family. TrmA subfamily.

It catalyses the reaction uridine(54) in tRNA + S-adenosyl-L-methionine = 5-methyluridine(54) in tRNA + S-adenosyl-L-homocysteine + H(+). The catalysed reaction is uridine(341) in tmRNA + S-adenosyl-L-methionine = 5-methyluridine(341) in tmRNA + S-adenosyl-L-homocysteine + H(+). Dual-specificity methyltransferase that catalyzes the formation of 5-methyluridine at position 54 (m5U54) in all tRNAs, and that of position 341 (m5U341) in tmRNA (transfer-mRNA). This chain is tRNA/tmRNA (uracil-C(5))-methyltransferase, found in Cellvibrio japonicus (strain Ueda107) (Pseudomonas fluorescens subsp. cellulosa).